Consider the following 488-residue polypeptide: Cobyric acid synthase (488 aa).

Residues 247–440 (LLRVIVPVLP…VHGVFDEPTA (194 aa)) enclose the GATase cobBQ-type domain. The active-site Nucleophile is the Cys328. His432 is a catalytic residue.

Belongs to the CobB/CobQ family. CobQ subfamily.

It participates in cofactor biosynthesis; adenosylcobalamin biosynthesis. In terms of biological role, catalyzes amidations at positions B, D, E, and G on adenosylcobyrinic A,C-diamide. NH(2) groups are provided by glutamine, and one molecule of ATP is hydrogenolyzed for each amidation. The protein is Cobyric acid synthase of Cupriavidus pinatubonensis (strain JMP 134 / LMG 1197) (Cupriavidus necator (strain JMP 134)).